A 134-amino-acid chain; its full sequence is MDSRTGEPITARQAMNGEYIWRVPNPLYFKIIKHHKRPFNYNHDIIQVRIQFNHNLRRALAIHKCFLDFTVFTRLQPATWRFLRVFKTQVMKYLDSLGVISINNVIRSVDHVLYNVLDSTFDVIEDHDIKFNFY.

Belongs to the geminiviridae replication enhancer protein family. As to quaternary structure, homooligomer. Interacts with the replication-associated protein (REP). Interacts with host proliferating cell nuclear antigen (PCNA). Interacts with host retinoblastoma-related protein 1 (RBR1), and may thereby deregulate the host cell cycle. Oligomerization and interaction with PCNA are necessary for optimal replication enhancement.

Functionally, increases viral DNA accumulation. Enhances infectivity and symptom expression. In Tomato leaf curl virus (strain Australia) (ToLCV), this protein is Replication enhancer protein.